Reading from the N-terminus, the 691-residue chain is Dipeptidyl peptidase 3 (691 aa).

Residue histidine 431 coordinates Zn(2+). Glutamate 432 is a catalytic residue. Zn(2+)-binding residues include histidine 436 and glutamate 492.

It belongs to the peptidase M49 family. Requires Zn(2+) as cofactor.

It localises to the cytoplasm. It catalyses the reaction Release of an N-terminal dipeptide from a peptide comprising four or more residues, with broad specificity. Also acts on dipeptidyl 2-naphthylamides.. The protein is Dipeptidyl peptidase 3 (dpp3-1) of Dictyostelium discoideum (Social amoeba).